A 91-amino-acid chain; its full sequence is MGRSLKKGPFIADSLLRKVEKQNDTDDKSVIKTWSRASTILPMMIGHTIAVHNGKSHVPVFITEQMVGHKLGEFAPTRTFKGHIKDKKGGR.

The protein belongs to the universal ribosomal protein uS19 family.

Protein S19 forms a complex with S13 that binds strongly to the 16S ribosomal RNA. The polypeptide is Small ribosomal subunit protein uS19 (Parasynechococcus marenigrum (strain WH8102)).